Consider the following 451-residue polypeptide: ADP-specific phosphofructokinase (451 aa).

In terms of domain architecture, ADPK spans 1–450; the sequence is MSVPQDVSIF…FITYVNYLKR (450 aa). Mg(2+) contacts are provided by E261, E291, and D434. D434 serves as the catalytic Proton acceptor.

The protein belongs to the carbohydrate kinase PfkC family. It depends on Mg(2+) as a cofactor.

It is found in the cytoplasm. It carries out the reaction beta-D-fructose 6-phosphate + ADP = beta-D-fructose 1,6-bisphosphate + AMP + H(+). It participates in carbohydrate degradation; glycolysis. Its function is as follows. Catalyzes the phosphorylation of fructose 6-phosphate to fructose 1,6-bisphosphate using ADP as the phosphate donor. In Pyrococcus abyssi (strain GE5 / Orsay), this protein is ADP-specific phosphofructokinase.